Reading from the N-terminus, the 503-residue chain is UDP-N-acetylmuramoylalanine--D-glutamate ligase (503 aa).

Residue 129–135 participates in ATP binding; it reads GTNGKTT. The tract at residues 284 to 305 is disordered; the sequence is DSEAEGEGKPRRRKADATAQEA.

This sequence belongs to the MurCDEF family.

The protein localises to the cytoplasm. It catalyses the reaction UDP-N-acetyl-alpha-D-muramoyl-L-alanine + D-glutamate + ATP = UDP-N-acetyl-alpha-D-muramoyl-L-alanyl-D-glutamate + ADP + phosphate + H(+). Its pathway is cell wall biogenesis; peptidoglycan biosynthesis. Cell wall formation. Catalyzes the addition of glutamate to the nucleotide precursor UDP-N-acetylmuramoyl-L-alanine (UMA). This is UDP-N-acetylmuramoylalanine--D-glutamate ligase from Cupriavidus pinatubonensis (strain JMP 134 / LMG 1197) (Cupriavidus necator (strain JMP 134)).